A 251-amino-acid chain; its full sequence is Ubiquinone/menaquinone biosynthesis C-methyltransferase UbiE (251 aa).

S-adenosyl-L-methionine-binding positions include threonine 74, aspartate 95, and 123–124 (NA).

Belongs to the class I-like SAM-binding methyltransferase superfamily. MenG/UbiE family.

The enzyme catalyses a 2-demethylmenaquinol + S-adenosyl-L-methionine = a menaquinol + S-adenosyl-L-homocysteine + H(+). The catalysed reaction is a 2-methoxy-6-(all-trans-polyprenyl)benzene-1,4-diol + S-adenosyl-L-methionine = a 5-methoxy-2-methyl-3-(all-trans-polyprenyl)benzene-1,4-diol + S-adenosyl-L-homocysteine + H(+). It functions in the pathway quinol/quinone metabolism; menaquinone biosynthesis; menaquinol from 1,4-dihydroxy-2-naphthoate: step 2/2. It participates in cofactor biosynthesis; ubiquinone biosynthesis. Functionally, methyltransferase required for the conversion of demethylmenaquinol (DMKH2) to menaquinol (MKH2) and the conversion of 2-polyprenyl-6-methoxy-1,4-benzoquinol (DDMQH2) to 2-polyprenyl-3-methyl-6-methoxy-1,4-benzoquinol (DMQH2). The sequence is that of Ubiquinone/menaquinone biosynthesis C-methyltransferase UbiE from Shewanella piezotolerans (strain WP3 / JCM 13877).